The chain runs to 349 residues: tRNA pseudouridine synthase D (349 aa).

Phe-27 is a substrate binding site. Residue Asp-80 is the Nucleophile of the active site. Asn-129 is a substrate binding site. The TRUD domain maps to 155–303; it reads GVPNYFGAQR…VEAARRAMLL (149 aa). Phe-329 provides a ligand contact to substrate.

Belongs to the pseudouridine synthase TruD family.

The catalysed reaction is uridine(13) in tRNA = pseudouridine(13) in tRNA. Functionally, responsible for synthesis of pseudouridine from uracil-13 in transfer RNAs. The polypeptide is tRNA pseudouridine synthase D (Escherichia coli (strain K12 / MC4100 / BW2952)).